The chain runs to 295 residues: HTH-type transcriptional regulator TrpI (295 aa).

The HTH lysR-type domain occupies 6-63; the sequence is PSLNALRAFEAAARLHSISLAAEELHVTHGAVSRQVRLLEDDLGVALFGKDGRGVKLT. Residues 23–42 constitute a DNA-binding region (H-T-H motif); it reads ISLAAEELHVTHGAVSRQVR.

This sequence belongs to the LysR transcriptional regulatory family. As to quaternary structure, homotetramer.

Functionally, activates the expression of the trpBA genes, which encode the two tryptophan synthase subunits, and represses initiation at its own promoter. Acts by binding to two adjacent sites in the intergenic region. In the absence of the inducer indoleglycerol phosphate (InGP), TrpI binds to site I. In the presence of InGP, TrpI binds to site I and site II. Binding to site II is site I dependent. InGP strongly stimulates binding to site II and is required for maximal activation of trpBA. The chain is HTH-type transcriptional regulator TrpI from Pseudomonas aeruginosa (strain ATCC 15692 / DSM 22644 / CIP 104116 / JCM 14847 / LMG 12228 / 1C / PRS 101 / PAO1).